A 143-amino-acid polypeptide reads, in one-letter code: MAIERTLSIVKPDAVSKNHIGEIFARFEKAGLKIVATKMKHLSQADAEGFYAEHKERGFFGDLVAFMTSGPVVVSVLEGENAVLAHREILGATNPKEAAPGTIRADFAVSIDENAAHGSDSVASAEREIAYFFADNEICPRTR.

Residues lysine 11, phenylalanine 59, arginine 87, threonine 93, arginine 104, and asparagine 114 each contribute to the ATP site. Histidine 117 acts as the Pros-phosphohistidine intermediate in catalysis.

This sequence belongs to the NDK family. As to quaternary structure, homotetramer. The cofactor is Mg(2+).

It is found in the cytoplasm. It catalyses the reaction dZDP + ATP = dZTP + ADP. It carries out the reaction a 2'-deoxyribonucleoside 5'-diphosphate + ATP = a 2'-deoxyribonucleoside 5'-triphosphate + ADP. The catalysed reaction is a ribonucleoside 5'-diphosphate + ATP = a ribonucleoside 5'-triphosphate + ADP. The protein operates within purine metabolism. Major role in the synthesis of nucleoside triphosphates other than ATP. The ATP gamma phosphate is transferred to the NDP beta phosphate via a ping-pong mechanism, using a phosphorylated active-site intermediate. Its function is as follows. (Microbial infection) Catalyzes the phosphorylation of dZDP to dZTP, when the bacterium is infected by a phage that produces the substrate for the synthesis of dZTP (2- amino-2'-deoxyadenosine 5'-triphosphate), which is then used by the phage as a DNA polymerase substrate. The chain is Nucleoside diphosphate kinase from Acinetobacter baumannii (strain AB307-0294).